The primary structure comprises 1440 residues: Pentatricopeptide repeat-containing protein At3g18110, chloroplastic (1440 aa).

The transit peptide at 1-44 directs the protein to the chloroplast; the sequence is MAVSAGALAFPALSVRATLNPEIKDEQANISSTTSSSQKFTYSR. The segment covering 63-72 has biased composition (polar residues); the sequence is TPSQTLSSPV. Positions 63–84 are disordered; that stretch reads TPSQTLSSPVSPIAGTPDSGDV. 25 PPR repeats span residues 224-258, 259-295, 296-330, 331-365, 366-400, 401-431, 437-471, 472-506, 507-541, 542-572, 608-638, 643-678, 680-714, 715-749, 751-785, 786-820, 821-855, 856-890, 891-925, 926-960, 961-995, 996-1030, 1031-1065, 1066-1100, and 1101-1135; these read RVQV…GCVP, DLIS…GLRP, DAIT…RCQP, DLWT…GFFP, DAVT…GFGK, DEMT…MKGL, DAIT…GIKP, TLQT…GTKP, DNLA…GHTP, SYTL…MEEL, ENDT…LKEH, KRLI…GWCF, SSTM…GCEA, SESV…GFHF, CSPM…GRTP, DLKT…GPSP, TVES…GFKI, SKSS…GYLP, TIRL…NFKV, ELAI…GLEP, DETT…GLDP, KLDT…GLKL, DRSF…GIEP, TLAT…EVEL, and TTLP…GLEP. Positions 1419-1440 are disordered; it reads KKKKMGNETNGINTRRKFVRSK.

Belongs to the PPR family. P subfamily.

It is found in the plastid. The protein localises to the chloroplast. In terms of biological role, may play a role in embryogenesis. The chain is Pentatricopeptide repeat-containing protein At3g18110, chloroplastic (EMB1270) from Arabidopsis thaliana (Mouse-ear cress).